A 177-amino-acid chain; its full sequence is Large ribosomal subunit protein uL6 (177 aa).

It belongs to the universal ribosomal protein uL6 family. As to quaternary structure, part of the 50S ribosomal subunit.

This protein binds to the 23S rRNA, and is important in its secondary structure. It is located near the subunit interface in the base of the L7/L12 stalk, and near the tRNA binding site of the peptidyltransferase center. This is Large ribosomal subunit protein uL6 from Roseobacter denitrificans (strain ATCC 33942 / OCh 114) (Erythrobacter sp. (strain OCh 114)).